We begin with the raw amino-acid sequence, 207 residues long: 3-hexulose-6-phosphate synthase (207 aa).

It belongs to the HPS/KGPDC family. HPS subfamily.

The enzyme catalyses D-ribulose 5-phosphate + formaldehyde = D-arabino-hex-3-ulose 6-phosphate. It functions in the pathway one-carbon metabolism; formaldehyde assimilation via RuMP pathway; D-fructose 6-phosphate from D-ribulose 5-phosphate and formaldehyde: step 1/2. Its function is as follows. Catalyzes the condensation of ribulose 5-phosphate with formaldehyde to form 3-hexulose 6-phosphate. The polypeptide is 3-hexulose-6-phosphate synthase (rmpA) (Mycobacterium gastri).